A 320-amino-acid chain; its full sequence is MAKQTLLLSPPSLSSQPGKLNETLQSYNRNATDLQMLDRLALGLASLPDSTYSTIVILAGGDNSFSESLKLINRQTFNQIIGSLRRGGYIYGQDAVSGVAFDHNEAILAGLIHVGNGKYLKPDIEEMQAVPLRLGRKNDHLAGAPSLEGSAAEHPFPPEVSEGKTASGDNRVAVVGSQKFRENIVSAATMDNNEASDDELINEDNLLDDSELSAPIIQPPECRPKAGKRRRACKDCTCGLAQKLQEEDAVKRADADEQLDAMKLLHDDLAEVDFTVRGKVGSCGNCSLGDAFRCEGCPFIGLPAFQPGEEVRLLNNDVQL.

The interval 1–130 (MAKQTLLLSP…KPDIEEMQAV (130 aa)) is N-terminal SAM-like domain. The linker stretch occupies residues 131-213 (PLRLGRKNDH…DNLLDDSELS (83 aa)). The segment at 141–166 (LAGAPSLEGSAAEHPFPPEVSEGKTA) is disordered. 4 residues coordinate [2Fe-2S] cluster: cysteine 222, cysteine 233, cysteine 236, and cysteine 238. Positions 222–238 (CRPKAGKRRRACKDCTC) are fe-S binding site A. The [4Fe-4S] cluster site is built by cysteine 283, cysteine 286, cysteine 294, and cysteine 297. 2 short sequence motifs (cx2C motif) span residues 283–286 (CGNC) and 294–297 (CEGC). The interval 283–297 (CGNCSLGDAFRCEGC) is fe-S binding site B.

This sequence belongs to the anamorsin family. As to quaternary structure, monomer. Interacts with tah18. Interacts with mia40. [2Fe-2S] cluster serves as cofactor. It depends on [4Fe-4S] cluster as a cofactor.

Its subcellular location is the cytoplasm. The protein localises to the mitochondrion intermembrane space. Its function is as follows. Component of the cytosolic iron-sulfur (Fe-S) protein assembly (CIA) machinery required for the maturation of extramitochondrial Fe-S proteins. Part of an electron transfer chain functioning in an early step of cytosolic Fe-S biogenesis, facilitating the de novo assembly of a [4Fe-4S] cluster on the scaffold complex cfd1-nbp35. Electrons are transferred to dre2 from NADPH via the FAD- and FMN-containing protein tah18. Tah18-dre2 are also required for the assembly of the diferric tyrosyl radical cofactor of ribonucleotide reductase (RNR), probably by providing electrons for reduction during radical cofactor maturation in the catalytic small subunit rnr2. The chain is Fe-S cluster assembly protein dre2 from Neosartorya fischeri (strain ATCC 1020 / DSM 3700 / CBS 544.65 / FGSC A1164 / JCM 1740 / NRRL 181 / WB 181) (Aspergillus fischerianus).